Consider the following 222-residue polypeptide: Ribulose-phosphate 3-epimerase (222 aa).

S7 contacts substrate. Residues H32, D34, and H65 each contribute to the a divalent metal cation site. The Proton acceptor role is filled by D34. Substrate contacts are provided by residues H65, 141-144, 174-176, and 196-197; these read GFSG, DGG, and GS. D174 serves as a coordination point for a divalent metal cation. The active-site Proton donor is D174.

It belongs to the ribulose-phosphate 3-epimerase family. The cofactor is a divalent metal cation.

It carries out the reaction D-ribulose 5-phosphate = D-xylulose 5-phosphate. Its pathway is carbohydrate degradation. Catalyzes the reversible epimerization of D-ribulose 5-phosphate to D-xylulose 5-phosphate. The protein is Ribulose-phosphate 3-epimerase of Aquifex aeolicus (strain VF5).